A 228-amino-acid polypeptide reads, in one-letter code: Putative N-acetylmannosamine-6-phosphate 2-epimerase (228 aa).

Belongs to the NanE family.

It carries out the reaction an N-acyl-D-glucosamine 6-phosphate = an N-acyl-D-mannosamine 6-phosphate. It functions in the pathway amino-sugar metabolism; N-acetylneuraminate degradation; D-fructose 6-phosphate from N-acetylneuraminate: step 3/5. Its function is as follows. Converts N-acetylmannosamine-6-phosphate (ManNAc-6-P) to N-acetylglucosamine-6-phosphate (GlcNAc-6-P). The chain is Putative N-acetylmannosamine-6-phosphate 2-epimerase from Thermosynechococcus vestitus (strain NIES-2133 / IAM M-273 / BP-1).